The primary structure comprises 25 residues: Histone H1.1 (25 aa).

The region spanning 1 to 25 (MVSEAIAALKEREGSSEFAIGKKKE) is the H15 domain. Residues 1-25 (MVSEAIAALKEREGSSEFAIGKKKE) form a disordered region. Residues 9–25 (LKEREGSSEFAIGKKKE) are compositionally biased toward basic and acidic residues.

It is found in the nucleus. Its subcellular location is the chromosome. Histones H1 are necessary for the condensation of nucleosome chains into higher-order structures. The chain is Histone H1.1 from Triticum aestivum (Wheat).